We begin with the raw amino-acid sequence, 327 residues long: Peroxidase 15 (327 aa).

Residues 1-23 (MASFSPLLAMALAIFIFSSHSNA) form the signal peptide. Pyrrolidone carboxylic acid is present on Gln-24. Intrachain disulfides connect Cys-34–Cys-115, Cys-67–Cys-72, Cys-121–Cys-323, and Cys-200–Cys-232. An N-linked (GlcNAc...) asparagine glycan is attached at Asn-36. His-65 acts as the Proton acceptor in catalysis. Residues Asp-66, Val-69, Gly-71, Asp-73, and Ser-75 each contribute to the Ca(2+) site. N-linked (GlcNAc...) asparagine glycosylation is found at Asn-81, Asn-96, and Asn-159. Pro-163 is a substrate binding site. Residues Asn-168 and Asn-171 are each glycosylated (N-linked (GlcNAc...) asparagine). Residue His-193 coordinates heme b. Thr-194 provides a ligand contact to Ca(2+). N-linked (GlcNAc...) asparagine glycans are attached at residues Asn-209 and Asn-221. 3 residues coordinate Ca(2+): Asp-245, Thr-248, and Asp-253. Residues Asn-287 and Asn-291 are each glycosylated (N-linked (GlcNAc...) asparagine).

This sequence belongs to the peroxidase family. Classical plant (class III) peroxidase subfamily. It depends on Ca(2+) as a cofactor. Heme b is required as a cofactor.

The protein localises to the secreted. It catalyses the reaction 2 a phenolic donor + H2O2 = 2 a phenolic radical donor + 2 H2O. Its function is as follows. Removal of H(2)O(2), oxidation of toxic reductants, biosynthesis and degradation of lignin, suberization, auxin catabolism, response to environmental stresses such as wounding, pathogen attack and oxidative stress. These functions might be dependent on each isozyme/isoform in each plant tissue. The sequence is that of Peroxidase 15 from Ipomoea batatas (Sweet potato).